The primary structure comprises 287 residues: Ribosomal RNA small subunit methyltransferase I (287 aa).

Belongs to the methyltransferase superfamily. RsmI family.

The protein localises to the cytoplasm. It catalyses the reaction cytidine(1402) in 16S rRNA + S-adenosyl-L-methionine = 2'-O-methylcytidine(1402) in 16S rRNA + S-adenosyl-L-homocysteine + H(+). Functionally, catalyzes the 2'-O-methylation of the ribose of cytidine 1402 (C1402) in 16S rRNA. This chain is Ribosomal RNA small subunit methyltransferase I, found in Helicobacter pylori (strain ATCC 700392 / 26695) (Campylobacter pylori).